Reading from the N-terminus, the 498-residue chain is ATP synthase subunit beta, chloroplastic (498 aa).

An ATP-binding site is contributed by 172–179 (GGAGVGKT).

This sequence belongs to the ATPase alpha/beta chains family. F-type ATPases have 2 components, CF(1) - the catalytic core - and CF(0) - the membrane proton channel. CF(1) has five subunits: alpha(3), beta(3), gamma(1), delta(1), epsilon(1). CF(0) has four main subunits: a(1), b(1), b'(1) and c(9-12).

It is found in the plastid. The protein resides in the chloroplast thylakoid membrane. It carries out the reaction ATP + H2O + 4 H(+)(in) = ADP + phosphate + 5 H(+)(out). Its function is as follows. Produces ATP from ADP in the presence of a proton gradient across the membrane. The catalytic sites are hosted primarily by the beta subunits. In Licuala grandis (Ruffled fan palm), this protein is ATP synthase subunit beta, chloroplastic.